A 151-amino-acid chain; its full sequence is Ribosome maturation factor RimP (151 aa).

It belongs to the RimP family.

It is found in the cytoplasm. Required for maturation of 30S ribosomal subunits. This is Ribosome maturation factor RimP from Photobacterium profundum (strain SS9).